The sequence spans 283 residues: Adenosyl-chloride synthase (283 aa).

Substrate contacts are provided by residues Asp11, Tyr70–Tyr72, and Thr128–Gly131. Gly131 contributes to the chloride binding site.

This sequence belongs to the SAM hydrolase / SAM-dependent halogenase family. In terms of assembly, homotrimer.

The catalysed reaction is chloride + S-adenosyl-L-methionine = 5'-chloro-5'-deoxyadenosine + L-methionine. In terms of biological role, involved in the biosynthesis of the proteosome inhibitor salinosporamide A (SalA). Catalyzes the halogenation of S-adenosyl-L-methionine (SAM) with chloride to generate 5'-chloro-5'-deoxyadenosine (5'-CIDA) and L-methionine. It can also use bromide and iodide, producing halogenated 5'-deoxyadenosine (5'-XDA) and L-methionine, however no halogenase activity is detected in the presence of fluoride. The polypeptide is Adenosyl-chloride synthase (Salinispora tropica (strain ATCC BAA-916 / DSM 44818 / JCM 13857 / NBRC 105044 / CNB-440)).